The following is a 514-amino-acid chain: Histidine ammonia-lyase (514 aa).

The 5-imidazolinone (Ala-Gly) cross-link spans 144–146; it reads ASG. 2,3-didehydroalanine (Ser) is present on Ser145.

It belongs to the PAL/histidase family. In terms of processing, contains an active site 4-methylidene-imidazol-5-one (MIO), which is formed autocatalytically by cyclization and dehydration of residues Ala-Ser-Gly.

It is found in the cytoplasm. It catalyses the reaction L-histidine = trans-urocanate + NH4(+). The protein operates within amino-acid degradation; L-histidine degradation into L-glutamate; N-formimidoyl-L-glutamate from L-histidine: step 1/3. This chain is Histidine ammonia-lyase, found in Rhodospirillum rubrum (strain ATCC 11170 / ATH 1.1.1 / DSM 467 / LMG 4362 / NCIMB 8255 / S1).